Consider the following 157-residue polypeptide: 2-amino-4-hydroxy-6-hydroxymethyldihydropteridine pyrophosphokinase (157 aa).

The protein belongs to the HPPK family.

It catalyses the reaction 6-hydroxymethyl-7,8-dihydropterin + ATP = (7,8-dihydropterin-6-yl)methyl diphosphate + AMP + H(+). It participates in cofactor biosynthesis; tetrahydrofolate biosynthesis; 2-amino-4-hydroxy-6-hydroxymethyl-7,8-dihydropteridine diphosphate from 7,8-dihydroneopterin triphosphate: step 4/4. Catalyzes the transfer of pyrophosphate from adenosine triphosphate (ATP) to 6-hydroxymethyl-7,8-dihydropterin, an enzymatic step in folate biosynthesis pathway. The sequence is that of 2-amino-4-hydroxy-6-hydroxymethyldihydropteridine pyrophosphokinase (folK) from Campylobacter jejuni subsp. jejuni serotype O:2 (strain ATCC 700819 / NCTC 11168).